Reading from the N-terminus, the 190-residue chain is Elongation factor P-like protein (190 aa).

The protein belongs to the elongation factor P family.

The polypeptide is Elongation factor P-like protein (Citrobacter koseri (strain ATCC BAA-895 / CDC 4225-83 / SGSC4696)).